Reading from the N-terminus, the 750-residue chain is Photosystem I P700 chlorophyll a apoprotein A1 (750 aa).

Helical transmembrane passes span 70 to 93 (VFSAHFGQLSIIFLWLSGMYFHGA), 156 to 179 (LYCTAIGALVFAALMLFAGWFHYH), 195 to 219 (LNHHLAGLLGLGSLSWAGHQVHVSL), 291 to 309 (IAHHHLAIAILFLIAGHMY), 346 to 369 (WHAQLSLNLAMLGSLTIVVAHHMY), 385 to 411 (LSLFTHHMWIGGFLIVGAAAHAAIFMV), 433 to 455 (AIISHLNWVCIFLGFHSFGLYIH), and 531 to 549 (FLVHHIHAFTIHVTVLILL). [4Fe-4S] cluster contacts are provided by C573 and C582. A run of 2 helical transmembrane segments spans residues 589–610 (HVFLGLFWMYNAISVVIFHFSW) and 664–686 (LSAYGLFFLGAHFVWAFSLMFLF). Chlorophyll a' is bound at residue H675. The chlorophyll a site is built by M683 and Y691. Residue W692 coordinates phylloquinone. A helical membrane pass occupies residues 724-744 (TVGVTHYLLGGIATTWAFFLA).

Belongs to the PsaA/PsaB family. The PsaA/B heterodimer binds the P700 chlorophyll special pair and subsequent electron acceptors. PSI consists of a core antenna complex that captures photons, and an electron transfer chain that converts photonic excitation into a charge separation. The eukaryotic PSI reaction center is composed of at least 11 subunits. P700 is a chlorophyll a/chlorophyll a' dimer, A0 is one or more chlorophyll a, A1 is one or both phylloquinones and FX is a shared 4Fe-4S iron-sulfur center. serves as cofactor.

It localises to the plastid. It is found in the chloroplast thylakoid membrane. It carries out the reaction reduced [plastocyanin] + hnu + oxidized [2Fe-2S]-[ferredoxin] = oxidized [plastocyanin] + reduced [2Fe-2S]-[ferredoxin]. In terms of biological role, psaA and PsaB bind P700, the primary electron donor of photosystem I (PSI), as well as the electron acceptors A0, A1 and FX. PSI is a plastocyanin-ferredoxin oxidoreductase, converting photonic excitation into a charge separation, which transfers an electron from the donor P700 chlorophyll pair to the spectroscopically characterized acceptors A0, A1, FX, FA and FB in turn. Oxidized P700 is reduced on the lumenal side of the thylakoid membrane by plastocyanin. The sequence is that of Photosystem I P700 chlorophyll a apoprotein A1 from Oenothera elata subsp. hookeri (Hooker's evening primrose).